Here is a 192-residue protein sequence, read N- to C-terminus: MTLILGSASPRRRELLAQLGVTPDAILPPDIDEEPRRGELPRPYCARLAAEKAAAVAAGPEDVVLCADTTVALGRRILGKPADAGEAARFLVALGGRRHEVITAVAVRRGDRLWQREVVSQVKMKRLSDLELNAYLASGEWEGKAGGYAIQGLASAFIPWISGSFTGIVGLPLAETATLLAAAGVPLYRAAA.

D68 acts as the Proton acceptor in catalysis.

Belongs to the Maf family. YhdE subfamily. A divalent metal cation is required as a cofactor.

The protein resides in the cytoplasm. The catalysed reaction is dTTP + H2O = dTMP + diphosphate + H(+). The enzyme catalyses UTP + H2O = UMP + diphosphate + H(+). Its function is as follows. Nucleoside triphosphate pyrophosphatase that hydrolyzes dTTP and UTP. May have a dual role in cell division arrest and in preventing the incorporation of modified nucleotides into cellular nucleic acids. The protein is dTTP/UTP pyrophosphatase of Cereibacter sphaeroides (strain ATCC 17023 / DSM 158 / JCM 6121 / CCUG 31486 / LMG 2827 / NBRC 12203 / NCIMB 8253 / ATH 2.4.1.) (Rhodobacter sphaeroides).